Consider the following 223-residue polypeptide: Deoxyribose-phosphate aldolase (223 aa).

D89 serves as the catalytic Proton donor/acceptor. Catalysis depends on K152, which acts as the Schiff-base intermediate with acetaldehyde. The Proton donor/acceptor role is filled by K181.

This sequence belongs to the DeoC/FbaB aldolase family. DeoC type 1 subfamily.

Its subcellular location is the cytoplasm. It catalyses the reaction 2-deoxy-D-ribose 5-phosphate = D-glyceraldehyde 3-phosphate + acetaldehyde. Its pathway is carbohydrate degradation; 2-deoxy-D-ribose 1-phosphate degradation; D-glyceraldehyde 3-phosphate and acetaldehyde from 2-deoxy-alpha-D-ribose 1-phosphate: step 2/2. Functionally, catalyzes a reversible aldol reaction between acetaldehyde and D-glyceraldehyde 3-phosphate to generate 2-deoxy-D-ribose 5-phosphate. The polypeptide is Deoxyribose-phosphate aldolase (Listeria welshimeri serovar 6b (strain ATCC 35897 / DSM 20650 / CCUG 15529 / CIP 8149 / NCTC 11857 / SLCC 5334 / V8)).